The sequence spans 235 residues: Ribonuclease 3 (235 aa).

The RNase III domain maps to 6–135 (LISLEKILGF…VIGAVYFDCG (130 aa)). Glu-48 is a Mg(2+) binding site. The active site involves Asp-52. Residues Asn-121 and Glu-124 each contribute to the Mg(2+) site. Glu-124 is an active-site residue. The region spanning 162–231 (DEKTTLQELL…AKKALELLKN (70 aa)) is the DRBM domain.

This sequence belongs to the ribonuclease III family. In terms of assembly, homodimer. The cofactor is Mg(2+).

It is found in the cytoplasm. The enzyme catalyses Endonucleolytic cleavage to 5'-phosphomonoester.. In terms of biological role, digests double-stranded RNA. Involved in the processing of primary rRNA transcript to yield the immediate precursors to the large and small rRNAs (23S and 16S). Processes some mRNAs, and tRNAs when they are encoded in the rRNA operon. Processes pre-crRNA and tracrRNA of type II CRISPR loci if present in the organism. The polypeptide is Ribonuclease 3 (Carboxydothermus hydrogenoformans (strain ATCC BAA-161 / DSM 6008 / Z-2901)).